A 315-amino-acid polypeptide reads, in one-letter code: Olfactory receptor 5AN6 (315 aa).

The Extracellular segment spans residues 1-29; sequence MPGGRNSTVITKFILVGFSDFPKLKLVLF. A helical membrane pass occupies residues 30-50; the sequence is VIFLGSYLSTVVWNLGLIILI. Over 51–54 the chain is Cytoplasmic; sequence RIDP. Residues 55-75 form a helical membrane-spanning segment; it reads YLHTPMYFFLSNLSFLDFCYI. Over 76-99 the chain is Extracellular; the sequence is SSTTPKMLSGFFQKSKSISFVGCT. A disulfide bridge links cysteine 98 with cysteine 180. Residues 100–120 form a helical membrane-spanning segment; the sequence is MQYFIFSSLGLSECCLLAAMA. At 121 to 123 the chain is on the cytoplasmic side; that stretch reads YDR. The helical transmembrane segment at 124–143 threads the bilayer; it reads YAAICNPLLYTAIMSPSLCV. Position 144 (histidine 144) is a topological domain, extracellular. A helical membrane pass occupies residues 145 to 165; the sequence is MVVGAYSTGLLGSLIQLCAIL. Topologically, residues 166–202 are cytoplasmic; sequence QLHFCGPNIINHFFCDLPQLLVLSCSETFPLQVLKFV. A helical transmembrane segment spans residues 203–223; that stretch reads IAVIFGVASVIVILISYGYII. The Extracellular portion of the chain corresponds to 224–240; that stretch reads GTILNISSVEGRSKAFN. The helical transmembrane segment at 241 to 261 threads the bilayer; sequence TCASHLTAVTLFFGSGLFVYM. The Cytoplasmic segment spans residues 262–272; it reads RPSSNSSQGYD. The helical transmembrane segment at 273-293 threads the bilayer; that stretch reads KMASVFYTVVIPMLNPLIYSL. The Extracellular portion of the chain corresponds to 294–315; that stretch reads RNKEIKDALQRCKNKCFSQCHC.

This sequence belongs to the G-protein coupled receptor 1 family. In terms of tissue distribution, localized in the dorsomedial and ventral region of the olfactory bulb.

It localises to the cell membrane. Functionally, odorant receptor specific for muscone. Muscone-binding causes a conformation change that triggers signaling via G(s)-class of G alpha protein GNAL, activating adenylyl cyclase. The protein is Olfactory receptor 5AN6 of Mus musculus (Mouse).